The following is a 35-amino-acid chain: Conotoxin Cal6.1d (35 aa).

Residues 1–8 (GLTRPSKR) constitute a propeptide that is removed on maturation. Intrachain disulfides connect C9–C25, C16–C29, and C24–C34.

The protein belongs to the conotoxin O1 superfamily. As to expression, expressed by the venom duct.

It is found in the secreted. Probable neurotoxin with unknown target. Possibly targets ion channels. The protein is Conotoxin Cal6.1d of Californiconus californicus (California cone).